A 345-amino-acid chain; its full sequence is Glycerol-3-phosphate dehydrogenase [NAD(P)+] (345 aa).

4 residues coordinate NADPH: Ser-23, Tyr-24, His-44, and Lys-118. Sn-glycerol 3-phosphate-binding residues include Lys-118, Gly-147, and Thr-149. Ala-151 is a binding site for NADPH. The sn-glycerol 3-phosphate site is built by Lys-203, Asp-256, Ser-266, Arg-267, and Asn-268. Lys-203 functions as the Proton acceptor in the catalytic mechanism. Residue Arg-267 coordinates NADPH. Positions 291 and 293 each coordinate NADPH.

It belongs to the NAD-dependent glycerol-3-phosphate dehydrogenase family.

Its subcellular location is the cytoplasm. The enzyme catalyses sn-glycerol 3-phosphate + NAD(+) = dihydroxyacetone phosphate + NADH + H(+). It catalyses the reaction sn-glycerol 3-phosphate + NADP(+) = dihydroxyacetone phosphate + NADPH + H(+). The protein operates within membrane lipid metabolism; glycerophospholipid metabolism. Its function is as follows. Catalyzes the reduction of the glycolytic intermediate dihydroxyacetone phosphate (DHAP) to sn-glycerol 3-phosphate (G3P), the key precursor for phospholipid synthesis. In Vibrio vulnificus (strain CMCP6), this protein is Glycerol-3-phosphate dehydrogenase [NAD(P)+].